We begin with the raw amino-acid sequence, 178 residues long: NADH-quinone oxidoreductase subunit B (178 aa).

[4Fe-4S] cluster contacts are provided by cysteine 45, cysteine 46, cysteine 111, and cysteine 140.

This sequence belongs to the complex I 20 kDa subunit family. In terms of assembly, NDH-1 is composed of 15 different subunits. Subunits NuoB, C, D, E, F, and G constitute the peripheral sector of the complex. [4Fe-4S] cluster is required as a cofactor.

The protein resides in the cell membrane. It carries out the reaction a quinone + NADH + 5 H(+)(in) = a quinol + NAD(+) + 4 H(+)(out). Functionally, NDH-1 shuttles electrons from NADH, via FMN and iron-sulfur (Fe-S) centers, to quinones in the respiratory chain. The immediate electron acceptor for the enzyme in this species is believed to be a menaquinone. Couples the redox reaction to proton translocation (for every two electrons transferred, four hydrogen ions are translocated across the cytoplasmic membrane), and thus conserves the redox energy in a proton gradient. The chain is NADH-quinone oxidoreductase subunit B from Deinococcus geothermalis (strain DSM 11300 / CIP 105573 / AG-3a).